The chain runs to 1181 residues: Cellulose synthase-like protein D5 (1181 aa).

A compositionally biased stretch (polar residues) spans 1-17 (MVKSAASQSPSPVTITV). Disordered regions lie at residues 1 to 70 (MVKS…DEGR) and 202 to 229 (KEPY…LPQM). Residues 48–59 (SSRATRRTSISS) are compositionally biased toward low complexity. Residues 210–222 (DDPETEEEDEEDE) show a composition bias toward acidic residues. 2 helical membrane-spanning segments follow: residues 312 to 332 (AIIS…GLFL) and 343 to 363 (AMWL…SWLL). Asp-443 is a catalytic residue. Positions 497–542 (VRERRRVKREYDEFKVRINSLPEAIRRRSDAYNVHEELRAKKKQME) form a coiled coil. The active site involves Asp-884. 6 helical membrane passes run 966 to 986 (LFLI…QFIV), 991 to 1011 (ITFL…SLLE), 1038 to 1058 (PAAV…SFTL), 1082 to 1102 (FLMV…AVGL), 1116 to 1136 (LVGG…FAKG), and 1146 to 1166 (TIVF…WVYI).

This sequence belongs to the glycosyltransferase 2 family. Plant cellulose synthase-like D subfamily. Expressed in vascular tissues.

It localises to the golgi apparatus membrane. Involved in stem and root growth. Possesses xylan and homogalacturonan synthase activity. The protein is Cellulose synthase-like protein D5 (CSLD5) of Arabidopsis thaliana (Mouse-ear cress).